The sequence spans 86 residues: Large ribosomal subunit protein bL27 (86 aa).

A disordered region spans residues 1 to 26; sequence MATKKAGGSSRNGRDSAGRRLGIKKS.

The protein belongs to the bacterial ribosomal protein bL27 family.

This chain is Large ribosomal subunit protein bL27, found in Rickettsia typhi (strain ATCC VR-144 / Wilmington).